A 37-amino-acid chain; its full sequence is Large ribosomal subunit protein bL36 (37 aa).

The protein belongs to the bacterial ribosomal protein bL36 family.

The polypeptide is Large ribosomal subunit protein bL36 (Mycobacterium leprae (strain Br4923)).